The primary structure comprises 202 residues: Protein cuti-1 (202 aa).

Over 1–37 (MPNDRVAPLPPNFVYSPHDKFYYAPATCNSMHYTTAS) the chain is Cytoplasmic. A helical transmembrane segment spans residues 38–58 (YISAFIEFLVMGTGAICFYVM). Residues 59 to 68 (SHKSDSIGKW) are Extracellular-facing. A helical membrane pass occupies residues 69-89 (LFYIQAGITVLSLLTSALMAF). Over 90–107 (GLWKENPQMLGSKLKFIE) the chain is Cytoplasmic. The helical transmembrane segment at 108-128 (FIICFLLIWAVISIVCMAFGI) threads the bilayer. Residues 129–148 (QFTRQVFGIFGKVHRIEQDY) are Extracellular-facing. Residues 149–169 (GPIWPFNIAVVSFFTAAIAIW) traverse the membrane as a helical segment. Residues 170–202 (TRIIIQGAADYLYDKAYFADKQNVELRESSKTR) are Cytoplasmic-facing.

As to quaternary structure, interacts with vps-39.

It is found in the cell membrane. The protein resides in the cytoplasm. Functionally, involved in cuticle formation and ensures cuticle shedding during larval development. Plays a role in maintaining the hypodermis. In association with vps-39, may play a role in vesicle tethering. This Caenorhabditis elegans protein is Protein cuti-1.